A 209-amino-acid chain; its full sequence is Adenylate kinase (209 aa).

59–64 (GSGKRT) is an ATP binding site. The tract at residues 79–108 (SSGQVLTRGVESGSETSQLAHSYVSRGERV) is NMP. Residues serine 80, 106 to 108 (ERV), 135 to 138 (GYPR), and glutamine 142 contribute to the AMP site. The tract at residues 172–205 (HRRYDPATNKXYHMLDNPPPGGRCRVMRTAPAEG) is LID. Arginine 173 is an ATP binding site.

It belongs to the adenylate kinase family. As to quaternary structure, monomer.

It is found in the cytoplasm. It carries out the reaction AMP + ATP = 2 ADP. In terms of biological role, catalyzes the reversible transfer of the terminal phosphate group between ATP and AMP. Plays an important role in cellular energy homeostasis and in adenine nucleotide metabolism. The chain is Adenylate kinase from Trypanosoma brucei rhodesiense.